We begin with the raw amino-acid sequence, 494 residues long: Solute carrier family 2, facilitated glucose transporter member 3 (494 aa).

Topologically, residues 1 to 10 (MGTTKVTPYL) are cytoplasmic. The chain crosses the membrane as a helical span at residues 11–32 (IFATSVAAIGSFQFGYNTGVIN). Residues 33 to 64 (APEMIIRDFLNYTLDEKLDEPPSRLLLTNLWS) lie on the Extracellular side of the membrane. Asparagine 43 carries an N-linked (GlcNAc...) asparagine glycan. Residues 65–84 (LSVAIFSVGGMIGSFSVGLF) traverse the membrane as a helical segment. At 85 to 89 (NRFGR) the chain is on the cytoplasmic side. A helical membrane pass occupies residues 90–110 (RNSMLIVNLLAVIGGCLMGFC). The Extracellular segment spans residues 111–117 (KISESVE). A helical transmembrane segment spans residues 118-141 (MLILGRLVIGVFCGLCTGFVPMYI). The Cytoplasmic portion of the chain corresponds to 142–152 (GEISPTALRGA). The helical transmembrane segment at 153-173 (FGTLNQLGIVIGILVAQIFGL) threads the bilayer. Glutamine 158 contributes to the D-glucose binding site. The Extracellular segment spans residues 174–182 (EIILGSEVL). Residues 183-203 (WPVLLGFTIIPAILQSAALPF) traverse the membrane as a helical segment. Residues 204-268 (CPESPRFLLI…LFRAPSYRQP (65 aa)) lie on the Cytoplasmic side of the membrane. Threonine 231 carries the post-translational modification Phosphothreonine. A helical membrane pass occupies residues 269–289 (IIISIVLQLSQQLSGINAVFY). The tract at residues 276 to 278 (QLS) is important for selectivity against fructose. D-glucose contacts are provided by residues 279 to 280 (QQ) and asparagine 285. Topologically, residues 290-303 (YSTGIFKDAGVKEP) are extracellular. The helical transmembrane segment at 304–324 (IYATIGAGVVNTIFTIVSVFL) threads the bilayer. Asparagine 314 is a binding site for D-glucose. Residues 325–330 (VERAGR) lie on the Cytoplasmic side of the membrane. The chain crosses the membrane as a helical span at residues 331–351 (RTLHLIGLGGMALCSVLMTVS). Topologically, residues 352–362 (LLLKDKYDTMS) are extracellular. A helical membrane pass occupies residues 363–388 (LVCIAAILIYVAFFEIGPGPIPWFIV). Glutamate 377 and tryptophan 385 together coordinate D-glucose. Residues 389 to 398 (AELFSQGPRP) are Cytoplasmic-facing. The chain crosses the membrane as a helical span at residues 399-419 (AAMAVAGCSNWTSNFLVGLLF). The Extracellular segment spans residues 420–428 (PSAAYYLGA). A helical membrane pass occupies residues 429–449 (YVFVIFAVFLVAFFIFTFFKV). The Cytoplasmic segment spans residues 450–494 (PETRGRTFEDITRAFEGQAAEANKLGKGPTMEMNSIQPIETTTHV). Serine 484 bears the Phosphoserine mark. At threonine 491 the chain carries Phosphothreonine.

It belongs to the major facilitator superfamily. Sugar transporter (TC 2.A.1.1) family. Glucose transporter subfamily. Interacts with SMIM43; the interaction may promote SLC2A3-mediated glucose transport to meet the energy needs of mesendoderm differentiation. As to expression, detected in stomach, placenta, lung and brain.

Its subcellular location is the cell membrane. The protein resides in the perikaryon. The protein localises to the cell projection. The enzyme catalyses D-glucose(out) = D-glucose(in). It catalyses the reaction D-galactose(in) = D-galactose(out). Its activity is regulated as follows. Deoxyglucose transport is inhibited by D-glucose, D-galactose and maltose. Galactose transport is inhibited by D-glucose and maltose. Its function is as follows. Facilitative glucose transporter. Can also mediate the uptake of various other monosaccharides across the cell membrane. Mediates the uptake of glucose, 2-deoxyglucose, galactose, mannose, xylose and fucose, and probably also dehydroascorbate. Does not mediate fructose transport. Required for mesendoderm differentiation. This is Solute carrier family 2, facilitated glucose transporter member 3 from Oryctolagus cuniculus (Rabbit).